Consider the following 290-residue polypeptide: uncharacterized protein (290 aa).

The protein localises to the cell membrane. Its subcellular location is the membrane raft. This is an uncharacterized protein from Bacillus subtilis (strain 168).